The chain runs to 107 residues: High mobility group protein HMG-I/HMG-Y (107 aa).

A disordered region spans residues 1–107; that stretch reads MSESSSKSSQ…ISQESSEEEQ (107 aa). Position 2 is an N-acetylserine (Ser2). Residue Lys7 is modified to N6-acetyllysine. Residue Ser8 is modified to ADP-ribosylserine. Ser9 carries the ADP-ribosylserine; alternate modification. Ser9 carries the phosphoserine; alternate modification. Lys15 is modified (N6-acetyllysine; alternate). Lys15 is covalently cross-linked (Glycyl lysine isopeptide (Lys-Gly) (interchain with G-Cter in SUMO2); alternate). A compositionally biased stretch (basic and acidic residues) spans 15-24; it reads KQEKDGTEKR. Residues 21–31 constitute a DNA-binding region (a.T hook 1); it reads TEKRGRGRPRK. Arg26 carries the asymmetric dimethylarginine; alternate modification. Arg26 carries the omega-N-methylarginine; alternate modification. Position 26 is a symmetric dimethylarginine; alternate (Arg26). Ser36 is modified (phosphoserine; by HIPK2 and CDC2). Phosphothreonine is present on residues Thr39 and Val42. 2 positions are modified to phosphoserine: Ser44 and Ser49. Phosphothreonine; by HIPK2 and CDC2 is present on Thr53. Residues 53–63 constitute a DNA-binding region (a.T hook 2); it reads TPKRPRGRPKG. The segment at 53–77 is interaction with HIPK2; the sequence is TPKRPRGRPKGSKNKGAAKTRKTTT. A compositionally biased stretch (basic residues) spans 55 to 74; the sequence is KRPRGRPKGSKNKGAAKTRK. Arg58 and Arg60 each carry asymmetric dimethylarginine; by PRMT6; alternate. Arg58 and Arg60 each carry omega-N-methylarginine; by PRMT6; alternate. The residue at position 67 (Lys67) is a Phosphothreonine. Thr78 is subject to Phosphothreonine; by HIPK2 and CDC2. Positions 78 to 89 form a DNA-binding region, a.T hook 3; sequence TPGRKPRGRPKK. Residues 93 to 107 show a composition bias toward acidic residues; that stretch reads EEEEGISQESSEEEQ. Ser99 is modified (phosphoserine). Residues Ser102 and Ser103 each carry the phosphoserine; by CK modification.

This sequence belongs to the HMGA family. In terms of assembly, interacts with HIPK2. Post-translationally, constitutively phosphorylated on two or three sites. Hyperphosphorylated at early stages of apoptosis, followed by dephosphorylation and methylation, which coincides with chromatin condensation. Isoforms HMG-I and HMG-Y can be phosphorylated by HIPK2. Phosphorylation of HMG-I at Ser-36, Thr-53 and Thr-78 and of HMG-Y at Thr-42 and Thr-67 by HIPK2 modulates DNA-binding affinity. In terms of processing, HMG-Y is not methylated. Methylation at Arg-58 is mutually exclusive with methylation at Arg-60.

It localises to the nucleus. The protein localises to the chromosome. HMG-I/Y bind preferentially to the minor groove of A+T rich regions in double-stranded DNA. It is suggested that these proteins could function in nucleosome phasing and in the 3'-end processing of mRNA transcripts. They are also involved in the transcription regulation of genes containing, or in close proximity to A+T-rich regions. In Homo sapiens (Human), this protein is High mobility group protein HMG-I/HMG-Y (HMGA1).